A 287-amino-acid polypeptide reads, in one-letter code: D-apionate oxidoisomerase (287 aa).

NAD(+) contacts are provided by residues G13–M15, E36, and D71. Zn(2+) is bound by residues H116 and E186.

The protein belongs to the ApnO family. The cofactor is Zn(2+).

The enzyme catalyses D-apionate + NAD(+) = 3-oxoisoapionate + NADH + H(+). It participates in carbohydrate metabolism. Functionally, involved in catabolism of D-apiose. Catalyzes the conversion of D-apionate to 3-oxo-isoapionate. This chain is D-apionate oxidoisomerase, found in Blautia hydrogenotrophica (strain DSM 10507 / JCM 14656 / S5a33) (Ruminococcus hydrogenotrophicus).